Here is a 561-residue protein sequence, read N- to C-terminus: Putative transport protein YbjL (561 aa).

Transmembrane regions (helical) follow at residues 8 to 28, 32 to 52, 66 to 86, 94 to 114, and 158 to 178; these read LLNG…LCLG, LGSI…LLGQ, FMLF…SIFF, MLAL…GKLF, and NLSL…IVGA. 2 consecutive RCK C-terminal domains span residues 200-288 and 292-373; these read RGLD…SFRN and VFDR…RIGF. 5 consecutive transmembrane segments (helical) span residues 383-403, 406-426, 451-471, 475-495, and 540-560; these read LLAF…TFQF, FSFG…LGFM, VFMA…LGAI, MLIA…LFGA, and AIAN…WPGL.

This sequence belongs to the AAE transporter (TC 2.A.81) family. YbjL subfamily.

Its subcellular location is the cell membrane. The protein is Putative transport protein YbjL of Shigella flexneri.